The chain runs to 409 residues: MVECVKGRPNVLAIVLAGGEGKRLFPLTEDRAKPAVPFGGTYRLIDFVLSNLVNAGYLKIAVLTQYKSHSLDRHISVSWNVSGPTGQYIASVPAQQRLGKRWFTGSADAILQSLNLISDEKPDYVIVFGADHVYRMDPSQMVDEHIKSGKSVSVAGIRVPRHEATAFGCIQSDDEGNITEFLEKPADPPGTPDDPDVTFASMGNYVFTTEALVRALKDDSENEDSEHDMGGDIIPYFVDRGDAHVYDFSRNIVPGATERDKGYWRDVGTIDAFYECHMDLISVHPIFNLYNKEWPIHTTVEGNLPPAKFVQGGIAQSSMVAPGSIISAGTVRNSVLSTDVIVEEGATVEGAVLMPGVRIGKGAVVRHAILDKNVVVRDGELIGVDHDRDSQRFKVSAGGVVTVGKNQVV.

Residues glycine 168, 183-184, and serine 201 each bind alpha-D-glucose 1-phosphate; that span reads EK.

Belongs to the bacterial/plant glucose-1-phosphate adenylyltransferase family. Homotetramer.

The catalysed reaction is alpha-D-glucose 1-phosphate + ATP + H(+) = ADP-alpha-D-glucose + diphosphate. Its pathway is glycan biosynthesis; glycogen biosynthesis. Involved in the biosynthesis of ADP-glucose, a building block required for the elongation reactions to produce glycogen. Catalyzes the reaction between ATP and alpha-D-glucose 1-phosphate (G1P) to produce pyrophosphate and ADP-Glc. In Corynebacterium efficiens (strain DSM 44549 / YS-314 / AJ 12310 / JCM 11189 / NBRC 100395), this protein is Glucose-1-phosphate adenylyltransferase.